Reading from the N-terminus, the 442-residue chain is Serine--tRNA ligase (442 aa).

249–251 is an L-serine binding site; sequence TSE. 280–282 provides a ligand contact to ATP; that stretch reads RSE. Position 303 (Glu303) interacts with L-serine. An ATP-binding site is contributed by 367–370; it reads EISS. Position 402 (Ser402) interacts with L-serine.

This sequence belongs to the class-II aminoacyl-tRNA synthetase family. Type-1 seryl-tRNA synthetase subfamily. In terms of assembly, homodimer. The tRNA molecule binds across the dimer.

It localises to the cytoplasm. The enzyme catalyses tRNA(Ser) + L-serine + ATP = L-seryl-tRNA(Ser) + AMP + diphosphate + H(+). The catalysed reaction is tRNA(Sec) + L-serine + ATP = L-seryl-tRNA(Sec) + AMP + diphosphate + H(+). The protein operates within aminoacyl-tRNA biosynthesis; selenocysteinyl-tRNA(Sec) biosynthesis; L-seryl-tRNA(Sec) from L-serine and tRNA(Sec): step 1/1. Functionally, catalyzes the attachment of serine to tRNA(Ser). Is also able to aminoacylate tRNA(Sec) with serine, to form the misacylated tRNA L-seryl-tRNA(Sec), which will be further converted into selenocysteinyl-tRNA(Sec). The protein is Serine--tRNA ligase of Acidovorax ebreus (strain TPSY) (Diaphorobacter sp. (strain TPSY)).